Here is a 443-residue protein sequence, read N- to C-terminus: Methyl-coenzyme M reductase II subunit beta (443 aa).

Y367 is a binding site for coenzyme M. Coenzyme B is bound at residue G369.

It belongs to the methyl-coenzyme M reductase beta subunit family. MCR is a hexamer of two alpha, two beta, and two gamma chains, forming a dimer of heterotrimers. Requires coenzyme F430 as cofactor.

The catalysed reaction is coenzyme B + methyl-coenzyme M = methane + coenzyme M-coenzyme B heterodisulfide. The protein operates within one-carbon metabolism; methyl-coenzyme M reduction; methane from methyl-coenzyme M: step 1/1. Functionally, component of the methyl-coenzyme M reductase (MCR) I that catalyzes the reductive cleavage of methyl-coenzyme M (CoM-S-CH3 or 2-(methylthio)ethanesulfonate) using coenzyme B (CoB or 7-mercaptoheptanoylthreonine phosphate) as reductant which results in the production of methane and the mixed heterodisulfide of CoB and CoM (CoM-S-S-CoB). This is the final step in methanogenesis. This Methanothermus fervidus (strain ATCC 43054 / DSM 2088 / JCM 10308 / V24 S) protein is Methyl-coenzyme M reductase II subunit beta (mrtB).